A 162-amino-acid polypeptide reads, in one-letter code: Ribosome-binding factor A (162 aa).

The tract at residues 121-162 (DEVARVAAGASPAGDPDPYKEPRAEDADDAEVDEPSGSRQAD) is disordered. Residues 125 to 136 (RVAAGASPAGDP) are compositionally biased toward low complexity.

The protein belongs to the RbfA family. Monomer. Binds 30S ribosomal subunits, but not 50S ribosomal subunits or 70S ribosomes.

The protein resides in the cytoplasm. Its function is as follows. One of several proteins that assist in the late maturation steps of the functional core of the 30S ribosomal subunit. Associates with free 30S ribosomal subunits (but not with 30S subunits that are part of 70S ribosomes or polysomes). Required for efficient processing of 16S rRNA. May interact with the 5'-terminal helix region of 16S rRNA. This Rhodococcus jostii (strain RHA1) protein is Ribosome-binding factor A.